A 248-amino-acid polypeptide reads, in one-letter code: Probable transcriptional regulatory protein ECH_0704 (248 aa).

The segment at 1–21 (MAGHSQFANIKHRKGAQDAKR) is disordered.

It belongs to the TACO1 family.

It is found in the cytoplasm. The sequence is that of Probable transcriptional regulatory protein ECH_0704 from Ehrlichia chaffeensis (strain ATCC CRL-10679 / Arkansas).